Here is a 344-residue protein sequence, read N- to C-terminus: N-lysine methyltransferase KMT5A-A (344 aa).

The segment at 143-176 is disordered; it reads TSSKHRKPARRKVKRSTKRAAESKSPANRKVTDY. The span at 145 to 160 shows a compositional bias: basic residues; that stretch reads SKHRKPARRKVKRSTK. An SET domain is found at 208–329; that stretch reads DGMMVRFIEG…EGEELLYDYG (122 aa). S-adenosyl-L-methionine-binding positions include 218–220, Tyr-263, and 290–291; these read KGR and NH.

This sequence belongs to the class V-like SAM-binding methyltransferase superfamily. Histone-lysine methyltransferase family. PR/SET subfamily.

It localises to the nucleus. Its subcellular location is the chromosome. The enzyme catalyses L-lysyl(20)-[histone H4] + S-adenosyl-L-methionine = N(6)-methyl-L-lysyl(20)-[histone H4] + S-adenosyl-L-homocysteine + H(+). The catalysed reaction is L-lysyl-[protein] + S-adenosyl-L-methionine = N(6)-methyl-L-lysyl-[protein] + S-adenosyl-L-homocysteine + H(+). Its function is as follows. Protein-lysine N-methyltransferase that monomethylates both histones and non-histone proteins. Specifically monomethylates 'Lys-20' of histone H4 (H4K20me1). H4K20me1 is enriched during mitosis and represents a specific tag for epigenetic transcriptional repression. Mainly functions in euchromatin regions, thereby playing a central role in the silencing of euchromatic genes. Required for cell proliferation, probably by contributing to the maintenance of proper higher-order structure of DNA during mitosis. Involved in chromosome condensation and proper cytokinesis. This Danio rerio (Zebrafish) protein is N-lysine methyltransferase KMT5A-A.